The chain runs to 164 residues: UPF0114 protein Sbal223_3668 (164 aa).

A run of 4 helical transmembrane segments spans residues 15–35, 53–73, 108–128, and 136–156; these read IMAP…IKFF, LVLV…IVMV, KVAA…FMDV, and IMWY…MGYL.

The protein belongs to the UPF0114 family.

Its subcellular location is the cell membrane. In Shewanella baltica (strain OS223), this protein is UPF0114 protein Sbal223_3668.